Here is a 454-residue protein sequence, read N- to C-terminus: Alpha-1,3-mannosyl-glycoprotein 4-beta-N-acetylglucosaminyltransferase C (454 aa).

Over 1–6 (MRCHLK) the chain is Cytoplasmic. The helical; Signal-anchor for type II membrane protein transmembrane segment at 7–24 (KWVVVAAGLSILTSLYVY) threads the bilayer. The Lumenal portion of the chain corresponds to 25-454 (MQRAQSGNLK…VWTVKEDKTI (430 aa)). 2 N-linked (GlcNAc...) asparagine glycosylation sites follow: Asn-58 and Asn-189.

Belongs to the glycosyltransferase 54 family. A divalent metal cation serves as cofactor.

It is found in the golgi apparatus membrane. The catalysed reaction is N(4)-{beta-D-GlcNAc-(1-&gt;2)-alpha-D-Man-(1-&gt;3)-[beta-D-GlcNAc-(1-&gt;2)-alpha-D-Man-(1-&gt;6)]-beta-D-Man-(1-&gt;4)-beta-D-GlcNAc-(1-&gt;4)-beta-D-GlcNAc}-L-asparaginyl-[protein] + UDP-N-acetyl-alpha-D-glucosamine = N(4)-{beta-D-GlcNAc-(1-&gt;2)-[beta-D-GlcNAc-(1-&gt;4)]-alpha-D-Man-(1-&gt;3)-[beta-D-GlcNAc-(1-&gt;2)-alpha-D-Man-(1-&gt;6)]-beta-D-Man-(1-&gt;4)-beta-D-GlcNAc-(1-&gt;4)-beta-D-GlcNAc}-L-asparaginyl-[protein] + UDP + H(+). It functions in the pathway protein modification; protein glycosylation. Its function is as follows. Glycosyltransferase that participates in the transfer of N-acetylglucosamine (GlcNAc) to the core mannose residues of N-linked glycans. Catalyzes the formation of the GlcNAcbeta1-4 branch on the GlcNAcbeta1-2Manalpha1-3 arm of the core structure of N-linked glycans. The polypeptide is Alpha-1,3-mannosyl-glycoprotein 4-beta-N-acetylglucosaminyltransferase C (mgat4c) (Danio rerio (Zebrafish)).